The following is a 205-amino-acid chain: Lymphotoxin-alpha (205 aa).

An N-terminal signal peptide occupies residues 1–34 (MTPPERLFLPRVCGTTLHLLLLGLLLVLLPGAQG). The O-linked (GalNAc...) threonine; partial glycan is linked to Thr41. A THD domain is found at 63–205 (PAAHLIGDPS…STVFFGAFAL (143 aa)). Asn96 carries an N-linked (GlcNAc...) asparagine glycan.

Belongs to the tumor necrosis factor family. In terms of assembly, homotrimer, and heterotrimer of either two LTB and one LTA subunits or (less prevalent) two LTA and one LTB subunits. Interacts with TNFRSF14.

The protein resides in the secreted. It localises to the membrane. In terms of biological role, cytokine that in its homotrimeric form binds to TNFRSF1A/TNFR1, TNFRSF1B/TNFBR and TNFRSF14/HVEM. In its heterotrimeric form with LTB binds to TNFRSF3/LTBR. Lymphotoxin is produced by lymphocytes and is cytotoxic for a wide range of tumor cells in vitro and in vivo. The chain is Lymphotoxin-alpha (LTA) from Homo sapiens (Human).